The following is a 328-amino-acid chain: Phenylalanine--tRNA ligase alpha subunit (328 aa).

Belongs to the class-II aminoacyl-tRNA synthetase family. Phe-tRNA synthetase alpha subunit type 1 subfamily. In terms of assembly, tetramer of two alpha and two beta subunits. The cofactor is Mg(2+).

It localises to the cytoplasm. It carries out the reaction tRNA(Phe) + L-phenylalanine + ATP = L-phenylalanyl-tRNA(Phe) + AMP + diphosphate + H(+). This is Phenylalanine--tRNA ligase alpha subunit from Buchnera aphidicola subsp. Baizongia pistaciae (strain Bp).